The sequence spans 267 residues: Phosphatidylglycerol--prolipoprotein diacylglyceryl transferase (267 aa).

The next 4 membrane-spanning stretches (helical) occupy residues 10–30 (VAIA…VVGF), 54–74 (LLFY…ALFY), 90–110 (WDGG…AWLF), and 116–136 (LAFF…LGAG). Arg-137 serves as a coordination point for a 1,2-diacyl-sn-glycero-3-phospho-(1'-sn-glycerol). 3 helical membrane passes run 169-189 (PSPL…LWWV), 197-217 (GMIS…VEFV), and 231-251 (WLTM…ALCV).

It belongs to the Lgt family.

It localises to the cell inner membrane. The catalysed reaction is L-cysteinyl-[prolipoprotein] + a 1,2-diacyl-sn-glycero-3-phospho-(1'-sn-glycerol) = an S-1,2-diacyl-sn-glyceryl-L-cysteinyl-[prolipoprotein] + sn-glycerol 1-phosphate + H(+). It functions in the pathway protein modification; lipoprotein biosynthesis (diacylglyceryl transfer). In terms of biological role, catalyzes the transfer of the diacylglyceryl group from phosphatidylglycerol to the sulfhydryl group of the N-terminal cysteine of a prolipoprotein, the first step in the formation of mature lipoproteins. The sequence is that of Phosphatidylglycerol--prolipoprotein diacylglyceryl transferase from Chromohalobacter salexigens (strain ATCC BAA-138 / DSM 3043 / CIP 106854 / NCIMB 13768 / 1H11).